The chain runs to 475 residues: Ribulose bisphosphate carboxylase large chain (475 aa).

Positions 1–2 (MS) are excised as a propeptide. At Pro-3 the chain carries N-acetylproline. Position 14 is an N6,N6,N6-trimethyllysine (Lys-14). Substrate-binding residues include Asn-123 and Thr-173. Lys-175 (proton acceptor) is an active-site residue. Lys-177 is a substrate binding site. Mg(2+) is bound by residues Lys-201, Asp-203, and Glu-204. Lys-201 is subject to N6-carboxylysine. The Proton acceptor role is filled by His-294. Residues Arg-295, His-327, and Ser-379 each coordinate substrate.

This sequence belongs to the RuBisCO large chain family. Type I subfamily. Heterohexadecamer of 8 large chains and 8 small chains; disulfide-linked. The disulfide link is formed within the large subunit homodimers. Mg(2+) is required as a cofactor. In terms of processing, the disulfide bond which can form in the large chain dimeric partners within the hexadecamer appears to be associated with oxidative stress and protein turnover.

It is found in the plastid. The protein resides in the chloroplast. The enzyme catalyses 2 (2R)-3-phosphoglycerate + 2 H(+) = D-ribulose 1,5-bisphosphate + CO2 + H2O. It catalyses the reaction D-ribulose 1,5-bisphosphate + O2 = 2-phosphoglycolate + (2R)-3-phosphoglycerate + 2 H(+). RuBisCO catalyzes two reactions: the carboxylation of D-ribulose 1,5-bisphosphate, the primary event in carbon dioxide fixation, as well as the oxidative fragmentation of the pentose substrate in the photorespiration process. Both reactions occur simultaneously and in competition at the same active site. In Eucalyptus globulus subsp. globulus (Tasmanian blue gum), this protein is Ribulose bisphosphate carboxylase large chain.